The chain runs to 292 residues: Tumor necrosis factor alpha-induced protein 8-like protein 3 (292 aa).

Residues 81–107 (DAQPAARSMDSDSGEQSEGEPVTAAGP) form a disordered region. The interval 109–292 (VFSSKSLALQ…INKLLDEKVL (184 aa)) is binding to phosphoinositides.

It belongs to the TNFAIP8 family. In terms of tissue distribution, widely expressed (at protein level). Highly expressed in most carcinoma cell lines.

The protein resides in the cytoplasm. The protein localises to the cell membrane. Its function is as follows. Acts as a lipid transfer protein. Preferentially captures and shuttles two lipid second messengers, i.e., phosphatidylinositol 4,5- bisphosphate and phosphatidylinositol 3,4,5-trisphosphate and increases their levels in the plasma membrane. Additionally, may also function as a lipid-presenting protein to enhance the activity of the PI3K-AKT and MEK-ERK pathways. May act as a regulator of tumorigenesis through its activation of phospholipid signaling. The sequence is that of Tumor necrosis factor alpha-induced protein 8-like protein 3 (TNFAIP8L3) from Homo sapiens (Human).